The primary structure comprises 566 residues: Macrophage colony-stimulating factor 1 (566 aa).

The N-terminal stretch at 1 to 32 (MTARGAAGRCPSSTWMGSRLLLVCLLVSRSVA) is a signal peptide. The Extracellular portion of the chain corresponds to 33-508 (EVSEHCSHMI…SSIQDPQTSA (476 aa)). N-linked (GlcNAc...) asparagine glycans are attached at residues N106, N153, and N171. 2 disordered regions span residues 197-417 (PSSD…KLLP) and 434-484 (GKKS…GAAR). A compositionally biased stretch (polar residues) spans 253-265 (PRSTCQTLESTEQ). O-linked (Xyl...) (chondroitin sulfate) serine glycosylation occurs at S302. Residues 348-360 (DQQPTNITDTPLT) are compositionally biased toward polar residues. N-linked (GlcNAc...) asparagine glycosylation occurs at N353. T355 and T357 each carry an O-linked (GalNAc...) threonine glycan. Residues 377 to 394 (EKTDGSSTLREDQQEPRS) show a composition bias toward basic and acidic residues. Residues 400–410 (LNPQRVGNSAT) are compositionally biased toward polar residues. Over residues 434 to 445 (GKKSTRDRRSPA) the composition is skewed to basic and acidic residues. The chain crosses the membrane as a helical span at residues 509–531 (FVFWVLGIILVLLAVGGLLFYSW). Residues 532–566 (KRRSHRDPRTLDSSVGRPEGSSLAQDEDRQVELPV) are Cytoplasmic-facing. The disordered stretch occupies residues 538–566 (DPRTLDSSVGRPEGSSLAQDEDRQVELPV). Over residues 557-566 (DEDRQVELPV) the composition is skewed to basic and acidic residues.

As to quaternary structure, homodimer or heterodimer; disulfide-linked. Likely to exist in multiple forms: homodimer consisting of 2 identical 150-200 kDa proteoglycan subunits, heterodimer consisting of a 150-200 kDa proteoglycan subunit and a truncated 43 kDa subunit, and a homodimer consisting of 2 identical 43 kDa subunits. Interacts with CSF1R. N-glycosylated. Post-translationally, O-glycosylated; contains chondroitin sulfate.

It localises to the cell membrane. Its subcellular location is the secreted. It is found in the extracellular space. In terms of biological role, cytokine that plays an essential role in the regulation of survival, proliferation and differentiation of hematopoietic precursor cells, especially mononuclear phagocytes, such as macrophages and monocytes. Promotes the release of pro-inflammatory chemokines, and thereby plays an important role in innate immunity and in inflammatory processes. Plays an important role in the regulation of osteoclast proliferation and differentiation, the regulation of bone resorption, and is required for normal bone development. Required for normal male and female fertility. Promotes reorganization of the actin cytoskeleton, regulates formation of membrane ruffles, cell adhesion and cell migration. Plays a role in lipoprotein clearance. The chain is Macrophage colony-stimulating factor 1 (Csf1) from Rattus norvegicus (Rat).